Consider the following 147-residue polypeptide: Large ribosomal subunit protein bL9 (147 aa).

Belongs to the bacterial ribosomal protein bL9 family.

Its function is as follows. Binds to the 23S rRNA. This chain is Large ribosomal subunit protein bL9, found in Mycoplasma capricolum subsp. capricolum (strain California kid / ATCC 27343 / NCTC 10154).